Reading from the N-terminus, the 194-residue chain is MMVEKSIVQEAKDIQLAMELISLGARLQMLESETQLSRGRLIKLYKELRGSPPPKGMLPFSTDWFMTWEQNIHSSMFYNAYLFLMKSGQCSGVEAVIKAYRLYLEQCPQQAGEAPLLALTRAWTLVRFVDSGMLQLSACSCCGGAFITHAHQPLNGFICSLCQPPSRAVKRRKLSPQLADIIPQLLDEQVKRAI.

Residues Cys139, Cys142, Cys159, and Cys162 each contribute to the Zn(2+) site.

The protein belongs to the FlhC family. As to quaternary structure, heterohexamer composed of two FlhC and four FlhD subunits. Each FlhC binds a FlhD dimer, forming a heterotrimer, and a hexamer assembles by dimerization of two heterotrimers. Requires Zn(2+) as cofactor.

It localises to the cytoplasm. Its function is as follows. Functions in complex with FlhD as a master transcriptional regulator that regulates transcription of several flagellar and non-flagellar operons by binding to their promoter region. Activates expression of class 2 flagellar genes, including fliA, which is a flagellum-specific sigma factor that turns on the class 3 genes. Also regulates genes whose products function in a variety of physiological pathways. The sequence is that of Flagellar transcriptional regulator FlhC from Serratia marcescens.